The following is a 347-amino-acid chain: Beta-hexosaminidase (347 aa).

Substrate-binding positions include Asp-62, Arg-70, Arg-134, and 164–165; that span reads KH. The active-site Proton donor/acceptor is His-177. Asp-249 acts as the Nucleophile in catalysis.

The protein belongs to the glycosyl hydrolase 3 family. NagZ subfamily.

The protein localises to the cytoplasm. It catalyses the reaction Hydrolysis of terminal non-reducing N-acetyl-D-hexosamine residues in N-acetyl-beta-D-hexosaminides.. It functions in the pathway cell wall biogenesis; peptidoglycan recycling. Functionally, plays a role in peptidoglycan recycling by cleaving the terminal beta-1,4-linked N-acetylglucosamine (GlcNAc) from peptide-linked peptidoglycan fragments, giving rise to free GlcNAc, anhydro-N-acetylmuramic acid and anhydro-N-acetylmuramic acid-linked peptides. This Mannheimia succiniciproducens (strain KCTC 0769BP / MBEL55E) protein is Beta-hexosaminidase.